We begin with the raw amino-acid sequence, 1014 residues long: Disease resistance protein RGA4 (1014 aa).

The structured coiled coil (CC) domain stretch occupies residues 1 to 182 (MEAALLSGFI…PRIHEADLVG (182 aa)). A coiled-coil region spans residues 105-145 (RTVRATKKLLQTNQHLAQELQRLKRMVEEANQRKQRYTAAA). Residues 189 to 466 (ELLEQLAERQ…WLAEGFVEPV (278 aa)) enclose the NB-ARC domain. LRR repeat units follow at residues 484–506 (RNIIEPINVSNNDKVKTCQTYGM), 507–530 (MREFISHMSISQNFVTFFCDDKFL), 531–552 (PKYVRRLSLHGDTVVNGDNFNG), 580–602 (LRVLDLEKCDDLNDDHLKEICNL), 603–624 (VLLKYLSLGGNISKLPKDIAKL), 625–647 (KDLEALDVRRSKVKIMPVEVFGL), 701–725 (MNKLRKLKIWCTSSAGSTDWTDLRE), 762–784 (PCYLSSLKLHGNFPQLPQFVTSL), 785–807 (RGLKELCLSSTKFTTGLLEALSN), 808–833 (LSYLQYLKLVADELEKFIIKVQGFPR), and 854–877 (LPFLVTLQLLCKDLHGLSDIKIEC).

The protein belongs to the disease resistance NB-LRR family. As to expression, expressed in leaves.

Its function is as follows. Probable disease resistance protein. Resistance proteins guard the plant against pathogens that contain an appropriate avirulence protein via an indirect interaction with this avirulence protein. That triggers a defense system including the hypersensitive response, which restricts the pathogen growth. At the opposite of cultivars Aichi asahi and Sasanishiki, the cultivars Nipponbare, Mokoto and Hitomebore don't recognize the effector avirulence protein AVR-Pia from M.oryzae. The protein is Disease resistance protein RGA4 of Oryza sativa subsp. japonica (Rice).